The chain runs to 323 residues: 1D-myo-inositol 2-acetamido-2-deoxy-alpha-D-glucopyranoside deacetylase 1 (323 aa).

Residues H30, D33, and H165 each contribute to the Zn(2+) site.

Belongs to the MshB deacetylase family. It depends on Zn(2+) as a cofactor.

It carries out the reaction 1D-myo-inositol 2-acetamido-2-deoxy-alpha-D-glucopyranoside + H2O = 1D-myo-inositol 2-amino-2-deoxy-alpha-D-glucopyranoside + acetate. In terms of biological role, catalyzes the deacetylation of 1D-myo-inositol 2-acetamido-2-deoxy-alpha-D-glucopyranoside (GlcNAc-Ins) in the mycothiol biosynthesis pathway. The sequence is that of 1D-myo-inositol 2-acetamido-2-deoxy-alpha-D-glucopyranoside deacetylase 1 from Catenulispora acidiphila (strain DSM 44928 / JCM 14897 / NBRC 102108 / NRRL B-24433 / ID139908).